A 372-amino-acid chain; its full sequence is Alpha-parvin (372 aa).

The span at 1–11 shows a compositional bias: low complexity; sequence MATSPQKSPSV. Residues 1-44 are disordered; the sequence is MATSPQKSPSVPKSPTPKSPPSRKKDDSFLGKLGGTLARRKKAK. Ala-2 carries the post-translational modification N-acetylalanine. Residues Ser-8, Ser-14, and Ser-19 each carry the phosphoserine modification. The segment at 21-25 is interaction with ARHGAP31; sequence PSRKK. Residues Ser-28 and Ser-62 each carry the phosphoserine modification. 2 Calponin-homology (CH) domains span residues 95 to 202 and 262 to 369; these read QELM…QYFR and NVVK…TKYR. The segment at 223-372 is required for interaction with TESK1 and ILK; the sequence is GILQSRQIQE…NLFTKYRNVE (150 aa).

The protein belongs to the parvin family. Component of the heterotrimeric IPP (ILK-PINCH-PARVIN) complex composed of ILK, LIMS1/PINCH and PARVA; the complex binds to F-actin via the C-terminal tail of LIMS1 and the N-terminal region of PARVA, promoting F-actin filament bundling. Interacts with TGFB1I1. Interacts with ARHGAP31. Interacts with the actin cytoskeleton. Interacts (via C-terminus) with TESK1 (via C-terminus); the interaction inhibits TESK1 kinase activity. Interacts with PXN/PAXILLIN (via LD motif 4). Widely expressed.

The protein resides in the cell junction. Its subcellular location is the focal adhesion. The protein localises to the cell membrane. It localises to the cytoplasm. It is found in the cytoskeleton. The protein resides in the myofibril. Its subcellular location is the sarcomere. The protein localises to the z line. In terms of biological role, plays a role in sarcomere organization and in smooth muscle cell contraction. Required for normal development of the embryonic cardiovascular system, and for normal septation of the heart outflow tract. Plays a role in sprouting angiogenesis and is required for normal adhesion of vascular smooth muscle cells to endothelial cells during blood vessel development. Plays a role in the reorganization of the actin cytoskeleton, formation of lamellipodia and ciliogenesis. Plays a role in the establishment of cell polarity, cell adhesion, cell spreading, and directed cell migration. Within the IPP (ILK-PINCH-PARVIN) complex, binds to F-actin, promoting F-actin bundling, a process required to generate force for actin cytoskeleton reorganization and subsequent dynamic cell adhesion events such as cell spreading and migration. The polypeptide is Alpha-parvin (Parva) (Rattus norvegicus (Rat)).